A 373-amino-acid chain; its full sequence is Glutamine synthetase (373 aa).

N-acetylalanine is present on alanine 2. Residues 2–25 form a required for glutamine-induced ubiquitination by CRL4(CRBN) and proteasomal degradation region; the sequence is ATSASSHLNKGIKQMYMNLPQGEK. An N6-acetyllysine mark is found at lysine 11 and lysine 14. One can recognise a GS beta-grasp domain in the interval 24 to 106; sequence EKIQLMYIWV…VFCEVFKYNR (83 aa). At tyrosine 104 the chain carries Phosphotyrosine. Residues 113 to 373 enclose the GS catalytic domain; sequence LRHSCKRIMD…TGDEPFQYKN (261 aa). Glutamate 134 is a binding site for ATP. Mn(2+) is bound by residues glutamate 134, glutamate 136, glutamate 196, and glutamate 203. 203 to 208 contacts ATP; the sequence is EFQIGP. Residue 246-247 participates in L-glutamate binding; that stretch reads NW. Histidine 253 contributes to the Mn(2+) binding site. ATP-binding positions include 255–257, arginine 319, and arginine 324; that span reads NFS. Arginine 319 provides a ligand contact to L-glutamate. Residue 336–338 coordinates ADP; that stretch reads YFE. Glutamate 338 provides a ligand contact to Mn(2+). Arginine 340 lines the L-glutamate pocket. Residue serine 343 is modified to Phosphoserine.

Belongs to the glutamine synthetase family. Decamer; composed of two pentamers. Interacts with PALMD. Interacts with RHOJ. Interacts with BEST2; this interaction tethers a fraction of GLUL to the membrane, causing a decrease of cytosolic glutamine synthase (GS) activity and inhibits the chloride channel activity of BEST2 by affecting the gating at the aperture in the absence of intracellular glutamate. It depends on Mg(2+) as a cofactor. Mn(2+) serves as cofactor. Palmitoylated; undergoes autopalmitoylation. Post-translationally, acetylated by EP300/p300; acetylation is stimulated by increased glutamine levels and promotes ubiquitin-mediated proteasomal degradation. In terms of processing, ubiquitinated by ZNRF1. Ubiquitinated by the DCX (DDB1-CUL4-X-box) E3 ubiquitin-protein ligase complex called CRL4(CRBN), leading to proteasomal degradation. As to expression, in the adult liver, expression is restricted to a small population of hepatocytes which form only a small rim of one to three hepatocytes around the central veins. Expressed in lung microvascular endothelial cells.

It is found in the cytoplasm. The protein localises to the cytosol. It localises to the microsome. Its subcellular location is the mitochondrion. The protein resides in the cell membrane. It carries out the reaction L-glutamate + NH4(+) + ATP = L-glutamine + ADP + phosphate + H(+). The catalysed reaction is L-cysteinyl-[protein] + hexadecanoyl-CoA = S-hexadecanoyl-L-cysteinyl-[protein] + CoA. With respect to regulation, glutamine synthetase activity is inhibited by methionine sulfoximine (MSO). In terms of biological role, glutamine synthetase that catalyzes the ATP-dependent conversion of glutamate and ammonia to glutamine. Its role depends on tissue localization: in the brain, it regulates the levels of toxic ammonia and converts neurotoxic glutamate to harmless glutamine, whereas in the liver, it is one of the enzymes responsible for the removal of ammonia. Plays a key role in ammonium detoxification during erythropoiesis: the glutamine synthetase activity is required to remove ammonium generated by porphobilinogen deaminase (HMBS) during heme biosynthesis to prevent ammonium accumulation and oxidative stress. Essential for proliferation of fetal skin fibroblasts. Independently of its glutamine synthetase activity, required for endothelial cell migration during vascular development. Involved in angiogenesis by regulating membrane localization and activation of the GTPase RHOJ, possibly by promoting RHOJ palmitoylation. May act as a palmitoyltransferase for RHOJ: able to autopalmitoylate and then transfer the palmitoyl group to RHOJ. Plays a role in ribosomal 40S subunit biogenesis. Through the interaction with BEST2, inhibits BEST2 channel activity by affecting the gating at the aperture in the absence of intracellular L-glutamate, but sensitizes BEST2 to intracellular L-glutamate, which promotes the opening of BEST2 and thus relieves its inhibitory effect on BEST2. The protein is Glutamine synthetase of Rattus norvegicus (Rat).